Here is a 43-residue protein sequence, read N- to C-terminus: Photosystem I reaction center subunit IX (43 aa).

The helical transmembrane segment at 7 to 27 (YLSTAPVLATFWFGLLAGLLI) threads the bilayer.

It belongs to the PsaJ family.

The protein localises to the plastid. It is found in the chloroplast thylakoid membrane. In terms of biological role, may help in the organization of the PsaE and PsaF subunits. This is Photosystem I reaction center subunit IX from Gnetum parvifolium (Small-leaved jointfir).